The chain runs to 159 residues: Large ribosomal subunit protein uL15 (159 aa).

Positions 1-13 are enriched in basic and acidic residues; the sequence is MRLNELRDNDGAT. The interval 1–41 is disordered; that stretch reads MRLNELRDNDGATKIRTRVGRGIGSGKGKTGGRGVKGQKSR. Over residues 21 to 35 the composition is skewed to gly residues; sequence RGIGSGKGKTGGRGV.

Belongs to the universal ribosomal protein uL15 family. In terms of assembly, part of the 50S ribosomal subunit.

Its function is as follows. Binds to the 23S rRNA. This is Large ribosomal subunit protein uL15 from Maricaulis maris (strain MCS10) (Caulobacter maris).